The chain runs to 93 residues: Small ribosomal subunit protein bS18 (93 aa).

This sequence belongs to the bacterial ribosomal protein bS18 family. In terms of assembly, part of the 30S ribosomal subunit. Forms a tight heterodimer with protein bS6.

Functionally, binds as a heterodimer with protein bS6 to the central domain of the 16S rRNA, where it helps stabilize the platform of the 30S subunit. The polypeptide is Small ribosomal subunit protein bS18 (Variovorax paradoxus (strain S110)).